The following is a 38-amino-acid chain: Photosystem II reaction center protein L (38 aa).

Residues 17–37 form a helical membrane-spanning segment; it reads SLFLGRLLIFVLGILFSSYIF.

This sequence belongs to the PsbL family. In terms of assembly, PSII is composed of 1 copy each of membrane proteins PsbA, PsbB, PsbC, PsbD, PsbE, PsbF, PsbH, PsbI, PsbJ, PsbK, PsbL, PsbM, PsbT, PsbX, PsbY, PsbZ, Psb30/Ycf12, peripheral proteins PsbO, CyanoQ (PsbQ), PsbU, PsbV and a large number of cofactors. It forms dimeric complexes.

The protein localises to the cellular thylakoid membrane. Its function is as follows. One of the components of the core complex of photosystem II (PSII). PSII is a light-driven water:plastoquinone oxidoreductase that uses light energy to abstract electrons from H(2)O, generating O(2) and a proton gradient subsequently used for ATP formation. It consists of a core antenna complex that captures photons, and an electron transfer chain that converts photonic excitation into a charge separation. This subunit is found at the monomer-monomer interface and is required for correct PSII assembly and/or dimerization. The polypeptide is Photosystem II reaction center protein L (Prochlorothrix hollandica).